Here is a 266-residue protein sequence, read N- to C-terminus: DNA-directed RNA polymerase subunit Rpo3 (266 aa).

Residues C205, C208, and C211 each coordinate [3Fe-4S] cluster.

This sequence belongs to the archaeal Rpo3/eukaryotic RPB3 RNA polymerase subunit family. Part of the RNA polymerase complex. Requires [3Fe-4S] cluster as cofactor.

The protein localises to the cytoplasm. It carries out the reaction RNA(n) + a ribonucleoside 5'-triphosphate = RNA(n+1) + diphosphate. Its function is as follows. DNA-dependent RNA polymerase (RNAP) catalyzes the transcription of DNA into RNA using the four ribonucleoside triphosphates as substrates. In Methanosarcina mazei (strain ATCC BAA-159 / DSM 3647 / Goe1 / Go1 / JCM 11833 / OCM 88) (Methanosarcina frisia), this protein is DNA-directed RNA polymerase subunit Rpo3.